The chain runs to 135 residues: Type 3 secretion system stator protein (135 aa).

The protein belongs to the SctL stator family. As to quaternary structure, the core secretion machinery of the T3SS is composed of approximately 20 different proteins, including cytoplasmic components, a base, an export apparatus and a needle. This subunit is part of the cytosolic complex.

It is found in the cytoplasm. In terms of biological role, component of the type III secretion system (T3SS), also called injectisome, which is used to inject bacterial effector proteins into eukaryotic host cells. Acts as a regulator of the HrcN/SctN ATPase activity. The chain is Type 3 secretion system stator protein from Rhizobium fredii (Sinorhizobium fredii).